Here is a 230-residue protein sequence, read N- to C-terminus: 7-cyano-7-deazaguanine synthase (230 aa).

An ATP-binding site is contributed by 7–17 (CSGGLDSVSLA). Zn(2+) contacts are provided by Cys-185, Cys-193, Cys-196, and Cys-199.

This sequence belongs to the QueC family. Zn(2+) is required as a cofactor.

It carries out the reaction 7-carboxy-7-deazaguanine + NH4(+) + ATP = 7-cyano-7-deazaguanine + ADP + phosphate + H2O + H(+). It participates in purine metabolism; 7-cyano-7-deazaguanine biosynthesis. In terms of biological role, catalyzes the ATP-dependent conversion of 7-carboxy-7-deazaguanine (CDG) to 7-cyano-7-deazaguanine (preQ(0)). The sequence is that of 7-cyano-7-deazaguanine synthase from Ruegeria pomeroyi (strain ATCC 700808 / DSM 15171 / DSS-3) (Silicibacter pomeroyi).